Consider the following 201-residue polypeptide: Protein OPI10 homolog (201 aa).

It belongs to the OPI10 family.

This is Protein OPI10 homolog from Anopheles gambiae (African malaria mosquito).